The following is a 771-amino-acid chain: Solute carrier family 7 member 14 (771 aa).

Transmembrane regions (helical) follow at residues 58–78, 83–103, 119–141, 187–207, 216–236, and 251–271; these read LISL…SGLV, AGPG…LSGV, AYTY…NLIL, YPDL…ALGV, VLNV…LFFI, and WSGV…FDII. A glycan (N-linked (GlcNAc...) asparagine) is linked at Asn-282. Transmembrane regions (helical) follow at residues 291–311, 336–356, 360–380, 384–404, and 407–427; these read ASLV…TLMV, FVVA…SLFP, VIYA…VSSY, PVVA…LVSL, and LIEM…VCVL. Ser-465, Ser-468, and Ser-488 each carry phosphoserine. The next 4 helical transmembrane spans lie at 565–585, 596–616, 628–648, and 655–675; these read VTIC…FIIF, WAIL…FVIL, MAPC…YLML, and WIRF…YGIW. The N-linked (GlcNAc...) asparagine glycan is linked to Asn-676. Positions 736 to 771 are disordered; that stretch reads DAKANGRTSSKAKSKSKHKQNSEALIANDELDYSPE. A compositionally biased stretch (basic residues) spans 745–754; it reads SKAKSKSKHK. Ser-757 and Ser-769 each carry phosphoserine.

It belongs to the amino acid-polyamine-organocation (APC) superfamily. Cationic amino acid transporter (CAT) (TC 2.A.3.3) family. As to expression, expressed in skin fibroblasts.

It localises to the lysosome membrane. The catalysed reaction is 4-aminobutanoate(in) = 4-aminobutanoate(out). Functionally, imports 4-aminobutanoate (GABA) into lysosomes. May act as a GABA sensor that regulates mTORC2-dependent INS signaling and gluconeogenesis. The transport mechanism and substrate selectivity remain to be elucidated. The protein is Solute carrier family 7 member 14 of Homo sapiens (Human).